The chain runs to 393 residues: NAD(P)H-quinone oxidoreductase subunit H, chloroplastic (393 aa).

It belongs to the complex I 49 kDa subunit family. In terms of assembly, NDH is composed of at least 16 different subunits, 5 of which are encoded in the nucleus.

The protein localises to the plastid. The protein resides in the chloroplast thylakoid membrane. The catalysed reaction is a plastoquinone + NADH + (n+1) H(+)(in) = a plastoquinol + NAD(+) + n H(+)(out). It catalyses the reaction a plastoquinone + NADPH + (n+1) H(+)(in) = a plastoquinol + NADP(+) + n H(+)(out). NDH shuttles electrons from NAD(P)H:plastoquinone, via FMN and iron-sulfur (Fe-S) centers, to quinones in the photosynthetic chain and possibly in a chloroplast respiratory chain. The immediate electron acceptor for the enzyme in this species is believed to be plastoquinone. Couples the redox reaction to proton translocation, and thus conserves the redox energy in a proton gradient. This is NAD(P)H-quinone oxidoreductase subunit H, chloroplastic from Daucus carota (Wild carrot).